Consider the following 154-residue polypeptide: Putative pre-16S rRNA nuclease (154 aa).

This sequence belongs to the YqgF nuclease family.

The protein resides in the cytoplasm. Could be a nuclease involved in processing of the 5'-end of pre-16S rRNA. The protein is Putative pre-16S rRNA nuclease of Rickettsia canadensis (strain McKiel).